We begin with the raw amino-acid sequence, 297 residues long: MKIAAFDIGGTALKMGVMARDGRLLETARQSINDSDGDRILQAMLSWLAAHPSCEGIAISAPGYIDPHSGLITMGGAIRRFDNFAMKSWLETRTGLPVSVENDANCVLLAERWQGKAAEMANFLVLTIGTGIGGAIFCQHQLINGARFRAGEFGYMLTDRPGGRDPRRYSMNENCTLRVLRHRYAQHIGAPLDSVTGELIFDRYDAGDPVCQRLVAEFFNGLGHGLYNLVHIFDPQTIFIGGGVVERPGFLTLLRQHLAWFGIADYLDTVSHGNDAGLIGAVYHFNQLYRSPDDDRH.

Ala-5–Thr-11 is an ATP binding site.

The protein belongs to the ROK (NagC/XylR) family. In terms of assembly, homotetramer.

It catalyses the reaction D-cellobiose + ATP = 6-phospho-beta-D-glucosyl-(1-&gt;4)-D-glucose + ADP + H(+). With respect to regulation, is inhibited by N-ethylmaleimide in vitro, but ATP affords considerable protection against the inhibitor. Its function is as follows. Catalyzes the ATP-dependent phosphorylation of a wide variety of beta-D-glucosides, to produce 6-phospho-beta-D-glucosides including cellobiose-6'-P, gentiobiose-6'-P, cellobiitol-6-P, salicin-6-P, and arbutin-6-P. Is not able to phosphorylate alpha-D-glucosides. May have a dual role of kinase and transcriptional regulator of the cellobiose-PTS operon. In Klebsiella pneumoniae, this protein is Beta-glucoside kinase (bglK).